A 376-amino-acid polypeptide reads, in one-letter code: DNA-directed RNA polymerase subunit alpha (376 aa).

The interval 1-259 (MSDNSQNLLY…KHFSIFEKMD (259 aa)) is alpha N-terminal domain (alpha-NTD). The interval 276–376 (KDDILHKLVL…EKIRSKNVKG (101 aa)) is alpha C-terminal domain (alpha-CTD).

It belongs to the RNA polymerase alpha chain family. As to quaternary structure, homodimer. The RNAP catalytic core consists of 2 alpha, 1 beta, 1 beta' and 1 omega subunit. When a sigma factor is associated with the core the holoenzyme is formed, which can initiate transcription.

The catalysed reaction is RNA(n) + a ribonucleoside 5'-triphosphate = RNA(n+1) + diphosphate. Functionally, DNA-dependent RNA polymerase catalyzes the transcription of DNA into RNA using the four ribonucleoside triphosphates as substrates. This Chlamydia felis (strain Fe/C-56) (Chlamydophila felis) protein is DNA-directed RNA polymerase subunit alpha.